We begin with the raw amino-acid sequence, 467 residues long: Phosphomethylpyrimidine synthase (467 aa).

Residues Asn-80, Met-109, Tyr-139, His-175, 195–197 (SRG), 236–239 (DSLR), and Glu-275 each bind substrate. Residue His-279 coordinates Zn(2+). Tyr-302 contacts substrate. His-343 is a Zn(2+) binding site. Cys-423, Cys-426, and Cys-431 together coordinate [4Fe-4S] cluster.

Belongs to the ThiC family. [4Fe-4S] cluster serves as cofactor.

The catalysed reaction is 5-amino-1-(5-phospho-beta-D-ribosyl)imidazole + S-adenosyl-L-methionine = 4-amino-2-methyl-5-(phosphooxymethyl)pyrimidine + CO + 5'-deoxyadenosine + formate + L-methionine + 3 H(+). It functions in the pathway cofactor biosynthesis; thiamine diphosphate biosynthesis. Its function is as follows. Catalyzes the synthesis of the hydroxymethylpyrimidine phosphate (HMP-P) moiety of thiamine from aminoimidazole ribotide (AIR) in a radical S-adenosyl-L-methionine (SAM)-dependent reaction. In Synechococcus sp. (strain WH7803), this protein is Phosphomethylpyrimidine synthase.